Consider the following 227-residue polypeptide: SPbeta prophage-derived uncharacterized membrane protein YomJ (227 aa).

The next 2 helical transmembrane spans lie at 16–36 and 131–151; these read LFFL…IVGL and GIVA…GLSA.

The protein localises to the cell membrane. The polypeptide is SPbeta prophage-derived uncharacterized membrane protein YomJ (yomJ) (Bacillus subtilis (strain 168)).